The chain runs to 599 residues: MKLILIYLILVFNLFNFINCQNILKVSNVRFAQTHVIPIEGKSWNIQGSTKHMSIVGKRRALLLASFQDQNLSYFATIWYDGGKVGMIQLNDPSQLPLTEDNGEKYSKVHHSGMIPKEWVRVGMKIQFSSFGGINGTEVSDILSPDVGQDYTLKMWILPFYLFGANDTNTQPFSKTKGIDSGISKELIEKWSCSDLQADNHPIQKIDWPYFVMEPRSGNPAMVITNSDQKKDGYAIMNGVLSILWLLRGMFGESSSSIQIYSPLLHLDAKGRYADTYGGLGGSSAGTGNHRFTGIFIHEQGHAMGLPHAGEAYDNKRKYPYKQGSLSGSEWGFDANHNEFLGTFIPPTAELYKTCKKNSIIDSKGRCVKQSVMQSGAGDQSSKYRYSMFADFEMTTIQNYFKNSIYYDETNGKYKKWNDTSKSYYAYKPITKEKGFEGVDENTPIERNVDIYSIIFTYSTVEKPKVGKISQIYPLLKSKGNLIRQFDPTNKKEMDSVNPKLNGEFKWYCNSSGCDYTIRVTFYDSSLKHVLLQQGKRKYKLPTGSFRDNINDPKSSDSFMLGGVNIKANKKIKKVELLETPFAWNGIPKNPTVLVSKSF.

The signal sequence occupies residues 1–20 (MKLILIYLILVFNLFNFINC). The 263-residue stretch at 145-407 (PDVGQDYTLK…QNYFKNSIYY (263 aa)) folds into the Peptidase M66 domain. Residue H298 participates in Zn(2+) binding. E299 is an active-site residue. The Zn(2+) site is built by H302 and H308.

Belongs to the dictomallein family. Zn(2+) is required as a cofactor.

It localises to the secreted. This Dictyostelium discoideum (Social amoeba) protein is Dictomallein-2 (dtmlB).